The sequence spans 785 residues: Probable serine protease Ga0098714_109514 (785 aa).

Basic and acidic residues-rich tracts occupy residues Leu-470–Arg-481 and Asp-491–Asp-501. Disordered stretches follow at residues Leu-470–Asp-503 and Asp-608–Ser-629.

This sequence belongs to the peptidase S1 family.

Its function is as follows. Probably a dedicated protease for substrate gasdermin bGSDM; cleaves the bGSDM precursor, releasing the pore-forming moiety, which integrates into the membrane and triggers cell death. Involved in defense against bacteriophages. Expression of gasdermin bGSDM and this neighboring protease is toxic in E.coli on solid medium. The polypeptide is Probable serine protease Ga0098714_109514 (Bradyrhizobium tropiciagri).